Reading from the N-terminus, the 206-residue chain is Ras-related protein RABG3d (206 aa).

GTP is bound at residue 15 to 22 (GDSGVGKT). The short motif at 37 to 45 (YKATIGADF) is the Effector region element. Residues 63-67 (DTAGQ), 125-128 (NKTD), and 158-159 (SA) each bind GTP. S-geranylgeranyl cysteine attachment occurs at residues cysteine 204 and cysteine 206. Position 206 is a cysteine methyl ester (cysteine 206).

Belongs to the small GTPase superfamily. Rab family.

Its subcellular location is the cell membrane. Its function is as follows. Intracellular vesicle trafficking and protein transport. The chain is Ras-related protein RABG3d (RABG3D) from Arabidopsis thaliana (Mouse-ear cress).